A 246-amino-acid chain; its full sequence is E3 ubiquitin-protein ligase MARCHF2 (246 aa).

The segment at 56 to 116 (GTQSDGPICR…ELCHTEFAVE (61 aa)) adopts an RING-CH-type zinc-finger fold. Positions 64, 67, 80, 82, 90, 93, 106, and 109 each coordinate Zn(2+). 2 consecutive transmembrane segments (helical) span residues 138–158 (LFCD…SGWL) and 175–195 (AVGL…WTLV).

The protein localises to the endoplasmic reticulum membrane. The protein resides in the lysosome membrane. Its subcellular location is the endosome membrane. The catalysed reaction is S-ubiquitinyl-[E2 ubiquitin-conjugating enzyme]-L-cysteine + [acceptor protein]-L-lysine = [E2 ubiquitin-conjugating enzyme]-L-cysteine + N(6)-ubiquitinyl-[acceptor protein]-L-lysine.. The protein operates within protein modification; protein ubiquitination. Functionally, E3 ubiquitin-protein ligase which may be involved in endosomal trafficking. E3 ubiquitin ligases accept ubiquitin from an E2 ubiquitin-conjugating enzyme in the form of a thioester and then directly transfer the ubiquitin to targeted substrates. This chain is E3 ubiquitin-protein ligase MARCHF2 (marchf2), found in Xenopus tropicalis (Western clawed frog).